The primary structure comprises 1148 residues: Envelopment polyprotein (1148 aa).

The N-terminal stretch at 1–23 is a signal peptide; the sequence is MGELSPVCLYLLLQGLLLCNTGA. The Lumenal portion of the chain corresponds to 24–495; sequence ARNLNELKME…VPGLHGWATM (472 aa). 6 disulfides stabilise this stretch: Cys-34–Cys-159, Cys-68–Cys-165, Cys-117–Cys-136, Cys-141–Cys-146, Cys-183–Cys-193, and Cys-218–Cys-257. N-linked (GlcNAc...) asparagine; by host glycosylation occurs at Asn-142. An N-linked (GlcNAc...) asparagine; by host glycan is attached at Asn-357. 4 disulfide bridges follow: Cys-386/Cys-445, Cys-390/Cys-399, Cys-415/Cys-434, and Cys-462/Cys-485. Asn-409 carries an N-linked (GlcNAc...) asparagine; by host glycan. The chain crosses the membrane as a helical span at residues 496–516; that stretch reads LLLLTLCFGWVLIPTITMILL. The Cytoplasmic portion of the chain corresponds to 517 to 637; that stretch reads KILIAFAYLC…LSLFRYRSRF (121 aa). The interval 526–543 is binding to the ribonucleoprotein; it reads CSKYNTDSKFRILIEKVK. CCHC-type zinc fingers lie at residues 555–575 and 580–601; these read CEVCQYECETAKELESHRKSC and CPYCLNPSEATTSALQAHFKVC. 3 binding to the ribonucleoprotein regions span residues 598–615, 602–613, and 621–635; these read FKVCKLTSRFQENLRKSL, KLTSRFQENLRK, and MQGCYRTLSLFRYRS. The 24-residue stretch at 621 to 644 folds into the ITAM domain; sequence MQGCYRTLSLFRYRSRFFVGLVWC. The YxxL signature appears at 625 to 628; the sequence is YRTL. Residues 638–658 traverse the membrane as a helical segment; that stretch reads FVGLVWCVLLVLELIVWAASA. Residues 659 to 1114 lie on the Lumenal side of the membrane; sequence ETQNLNAGWT…EWILGVLNGN (456 aa). 8 disulfide bridges follow: Cys-745/Cys-780, Cys-749/Cys-787, Cys-761/Cys-894, Cys-775/Cys-905, Cys-790/Cys-913, Cys-816/Cys-825, Cys-833/Cys-842, and Cys-873/Cys-877. The fusion loop stretch occupies residues 767–787; it reads YEYETGWGCNPPDCPGVGTGC. Asn-937 is a glycosylation site (N-linked (GlcNAc...) asparagine; by host). 5 disulfide bridges follow: Cys-979–Cys-1009, Cys-1002–Cys-1054, Cys-1019–Cys-1024, Cys-1055–Cys-1060, and Cys-1094–Cys-1098. Residues 1115–1135 form a helical membrane-spanning segment; that stretch reads WMVVAVLVVLLILSILLFTLC. Binding to the ribonucleoprotein stretches follow at residues 1131–1143 and 1131–1148; these read LFTLCCPRRPSYR and LFTLCCPRRPSYRKEHKP. The Cytoplasmic portion of the chain corresponds to 1136-1148; it reads CPRRPSYRKEHKP.

Belongs to the hantavirus envelope glycoprotein family. As to quaternary structure, homodimer. Homotetramer; forms heterotetrameric Gn-Gc spikes in the pre-fusion conformation. Interacts (via C-terminus) with the nucleoprotein. Interacts with host TUFM; this interaction contributes to the virus-induced degradation of mitochondria by autophagy, which leads to degradation of host MAVS and inhibition of type I interferon (IFN) responses. Interacts with host MAP1LC3B; this interaction contributes to the virus-induced degradation of mitochondria by autophagy, which leads to degradation of host MAVS and inhibition of type I interferon (IFN) responses. Homodimer. Homotetramer; forms heterotetrameric Gn-Gc spikes in the pre-fusion conformation. Homotrimer; forms homotrimer in the post-fusion conformation at acidic pH. Interacts (via C-terminus) with the nucleoprotein. Post-translationally, envelope polyprotein precursor is quickly cleaved in vivo just after synthesis, presumably by host signal peptidase.

It localises to the virion membrane. Its subcellular location is the host cell surface. It is found in the host Golgi apparatus membrane. The protein resides in the host endoplasmic reticulum membrane. The protein localises to the host mitochondrion. In terms of biological role, forms homotetramers with glycoprotein C at the surface of the virion. Attaches the virion to host cell receptors including integrin ITGAV/ITGB3. This attachment induces virion internalization predominantly through clathrin-dependent endocytosis. Mediates the assembly and budding of infectious virus particles through its interaction with the nucleocapsid protein and the viral genome. May dysregulate normal immune and endothelial cell responses through an ITAM motif. Translocates to mitochondria, binds to host TUFM and recruits MAP1LC3B. These interactions induce mitochondrial autophagy and therefore destruction of host MAVS leading to inhibition of type I interferon (IFN) responses. Concomitant breakdown of glycoprotein N is apparently prevented by the nucleoprotein that may inhibit Gn-stimulated autophagosome-lysosome fusion. Interacts with the viral genomic RNA. Its function is as follows. Forms homotetramers with glycoprotein N at the surface of the virion. Attaches the virion to host cell receptors including integrin ITGAV/ITGB3. This attachment induces virion internalization predominantly through clathrin-dependent endocytosis. Class II fusion protein that promotes fusion of viral membrane with host endosomal membrane after endocytosis of the virion. The sequence is that of Envelopment polyprotein (GP) from Puumala virus (strain K27).